The sequence spans 119 residues: Beta-2-microglobulin (119 aa).

The signal sequence occupies residues 1–20 (MARTVATFFLMLVSLACLDA). An Ig-like C1-type domain is found at 25–114 (PQVQVYTRHP…VTLKEPKVVT (90 aa)). An intrachain disulfide couples Cys-45 to Cys-100.

It belongs to the beta-2-microglobulin family. In terms of assembly, heterodimer of an alpha chain and a beta chain. Beta-2-microglobulin is the beta-chain of major histocompatibility complex class I molecules.

The protein resides in the secreted. In terms of biological role, component of the class I major histocompatibility complex (MHC). Involved in the presentation of peptide antigens to the immune system. This Sigmodon hispidus (Hispid cotton rat) protein is Beta-2-microglobulin (B2M).